Consider the following 88-residue polypeptide: Small ribosomal subunit protein uS17 (88 aa).

Belongs to the universal ribosomal protein uS17 family. Part of the 30S ribosomal subunit.

One of the primary rRNA binding proteins, it binds specifically to the 5'-end of 16S ribosomal RNA. The polypeptide is Small ribosomal subunit protein uS17 (Prochlorococcus marinus (strain SARG / CCMP1375 / SS120)).